Here is a 228-residue protein sequence, read N- to C-terminus: UPF0502 protein Rfer_1648 (228 aa).

Belongs to the UPF0502 family.

This chain is UPF0502 protein Rfer_1648, found in Albidiferax ferrireducens (strain ATCC BAA-621 / DSM 15236 / T118) (Rhodoferax ferrireducens).